Reading from the N-terminus, the 372-residue chain is Aminodeoxyfutalosine synthase (372 aa).

In terms of domain architecture, Radical SAM core spans 53-292; the sequence is HKTYFVHSIR…VARLYLDNFP (240 aa). Positions 69, 73, and 76 each coordinate [4Fe-4S] cluster.

The protein belongs to the radical SAM superfamily. MqnE family. It depends on [4Fe-4S] cluster as a cofactor.

The enzyme catalyses 3-[(1-carboxyvinyl)-oxy]benzoate + S-adenosyl-L-methionine + H2O = 6-amino-6-deoxyfutalosine + hydrogencarbonate + L-methionine + H(+). Its pathway is quinol/quinone metabolism; menaquinone biosynthesis. In terms of biological role, radical SAM enzyme that catalyzes the addition of the adenosyl radical to the double bond of 3-[(1-carboxyvinyl)oxy]benzoate, leading to aminodeoxyfutalosine (AFL), a key intermediate in the formation of menaquinone (MK, vitamin K2) from chorismate. This chain is Aminodeoxyfutalosine synthase, found in Thermus thermophilus (strain ATCC 27634 / DSM 579 / HB8).